The chain runs to 176 residues: Sigma intracellular receptor 2 (176 aa).

At M1–C9 the chain is on the cytoplasmic side. Residues V10–L30 form a helical membrane-spanning segment. The EXPERA domain occupies V10–L158. Residues Q31 to S68 lie on the Lumenal side of the membrane. A helical transmembrane segment spans residues F69–L89. The cholesterol site is built by V75 and Q77. Residues K90 to P99 lie on the Cytoplasmic side of the membrane. Residues A100 to F120 form a helical membrane-spanning segment. Residues E121–R140 lie on the Lumenal side of the membrane. A helical membrane pass occupies residues L141–M161. Residues L162–K176 are Cytoplasmic-facing. An ER retention motif motif is present at residues K172–K176.

Belongs to the TMEM97/sigma-2 receptor family. Homodimer. Interacts with NPC1; the interaction impairs NPC1-mediated cholesterol transport. Interacts with PGRMC1 and LDLR; the interaction increases LDL internalization. Interacts with histatin 1/HTN1; the interaction induces HTN1-stimulating wound healing. Interacts with TSPO.

Its subcellular location is the rough endoplasmic reticulum membrane. It is found in the nucleus membrane. Sigma-2 receptor which contributes to ameliorate dysfunctional cellular processes and slow degenerative progression by regulating cell functions including cholesterol biosynthesis/trafficking, membrane trafficking, autophagy, lipid membrane-bound protein trafficking, and receptor stabilization at the cell surface. Forms a ternary complex with PGRMC1 receptor and low density lipoprotein receptor/LDLR at the plasma membrane, which increases LDLR-mediated LDL cholesterol internalization. Decreases lysosomal sterol transporter NPC1 availability to the cell, probably through NPC1-binding, hence controlling lipid transport, including cholesterol and LBPA, outside of late endosome/lysosome. Binds regio- and stereoselective ligand 20(S)-hydroxycholesterol (20(S)-OHC) which enhances TMEM97-NPC1 interaction and decreases TMEM97-PGRMC1 and TMEM97-TSPO interactions, thereby linking OHC binding to cholesterol homeostasis. Also able to bind cholesterol. Binds histatin 1 (Hst 1)/HN1 salivary peptide at the ER membrane, which is critical for increasing mitochondria-ER contacts and stimulating Hst1 wound healing properties. May alter the activity of some cytochrome P450 proteins. Although shows homologies with sterol isomerases (EXPERA domain), not able to catalyze sterol isomerization. However, may act as sensors of these molecules. Acts as a quality control factor in the ER, promoting the proteolytic degradation of nonproductive and extramitochondrial precursor proteins in the ER membrane thus removing them from the ER surface. The polypeptide is Sigma intracellular receptor 2 (Tmem97) (Macaca fascicularis (Crab-eating macaque)).